The sequence spans 390 residues: Succinate--CoA ligase [ADP-forming] subunit beta (390 aa).

An ATP-grasp domain is found at Lys9–Glu248. ATP is bound by residues Lys50, Gly57 to Gly59, Glu103, Met106, and Glu111. Mg(2+) contacts are provided by Asn203 and Asp217. Substrate-binding positions include Asn268 and Gly325 to Val327.

Belongs to the succinate/malate CoA ligase beta subunit family. Heterotetramer of two alpha and two beta subunits. Requires Mg(2+) as cofactor.

It catalyses the reaction succinate + ATP + CoA = succinyl-CoA + ADP + phosphate. The catalysed reaction is GTP + succinate + CoA = succinyl-CoA + GDP + phosphate. It participates in carbohydrate metabolism; tricarboxylic acid cycle; succinate from succinyl-CoA (ligase route): step 1/1. Functionally, succinyl-CoA synthetase functions in the citric acid cycle (TCA), coupling the hydrolysis of succinyl-CoA to the synthesis of either ATP or GTP and thus represents the only step of substrate-level phosphorylation in the TCA. The beta subunit provides nucleotide specificity of the enzyme and binds the substrate succinate, while the binding sites for coenzyme A and phosphate are found in the alpha subunit. In Prosthecochloris aestuarii (strain DSM 271 / SK 413), this protein is Succinate--CoA ligase [ADP-forming] subunit beta.